The following is a 403-amino-acid chain: Ribosomal RNA large subunit methyltransferase I (403 aa).

Residues 9–88 (YPRLVLSKGR…ESIDIAFFTR (80 aa)) form the PUA domain.

The protein belongs to the methyltransferase superfamily. RlmI family.

Its subcellular location is the cytoplasm. The enzyme catalyses cytidine(1962) in 23S rRNA + S-adenosyl-L-methionine = 5-methylcytidine(1962) in 23S rRNA + S-adenosyl-L-homocysteine + H(+). Specifically methylates the cytosine at position 1962 (m5C1962) of 23S rRNA. This Salmonella enteritidis PT4 (strain P125109) protein is Ribosomal RNA large subunit methyltransferase I.